A 150-amino-acid polypeptide reads, in one-letter code: Depactin (150 aa).

One can recognise an ADF-H domain in the interval 3 to 148 (SGTALDENVK…SEEAIGDKIK (146 aa)).

Belongs to the actin-binding proteins ADF family.

Functionally, depactin interacts with actin at some of its 12 N-terminal residues and 20 C-terminal residues. Binds to actin monomers from filaments and in solution. The chain is Depactin from Asterias amurensis (Northern Pacific seastar).